We begin with the raw amino-acid sequence, 134 residues long: Small ribosomal subunit protein uS11 (134 aa).

A disordered region spans residues 115–134 (VTPIPTDSTRRKGGRRGRRL). A compositionally biased stretch (basic residues) spans 125–134 (RKGGRRGRRL).

Belongs to the universal ribosomal protein uS11 family.

The chain is Small ribosomal subunit protein uS11 (RPS14) from Syntrichia ruralis (Great hairy screw-moss).